The primary structure comprises 860 residues: Leucine--tRNA ligase (860 aa).

Residues 42 to 52 (PYPSGRLHMGH) carry the 'HIGH' region motif. The 'KMSKS' region signature appears at 619 to 623 (KMSKS). Lys622 provides a ligand contact to ATP.

Belongs to the class-I aminoacyl-tRNA synthetase family.

The protein localises to the cytoplasm. The catalysed reaction is tRNA(Leu) + L-leucine + ATP = L-leucyl-tRNA(Leu) + AMP + diphosphate. The polypeptide is Leucine--tRNA ligase (Escherichia coli O127:H6 (strain E2348/69 / EPEC)).